Reading from the N-terminus, the 369-residue chain is 3-isopropylmalate dehydrogenase (369 aa).

Position 77 to 90 (77 to 90 (GPKWDDLPFDKKPE)) interacts with NAD(+). Substrate contacts are provided by R97, R107, R135, and D226. Mg(2+)-binding residues include D226, D250, and D254. Position 289–301 (289–301 (GSAPDIAGKDMAN)) interacts with NAD(+).

This sequence belongs to the isocitrate and isopropylmalate dehydrogenases family. LeuB type 1 subfamily. In terms of assembly, homodimer. Mg(2+) is required as a cofactor. The cofactor is Mn(2+).

The protein resides in the cytoplasm. It carries out the reaction (2R,3S)-3-isopropylmalate + NAD(+) = 4-methyl-2-oxopentanoate + CO2 + NADH. It functions in the pathway amino-acid biosynthesis; L-leucine biosynthesis; L-leucine from 3-methyl-2-oxobutanoate: step 3/4. Functionally, catalyzes the oxidation of 3-carboxy-2-hydroxy-4-methylpentanoate (3-isopropylmalate) to 3-carboxy-4-methyl-2-oxopentanoate. The product decarboxylates to 4-methyl-2 oxopentanoate. This chain is 3-isopropylmalate dehydrogenase, found in Paramagnetospirillum magneticum (strain ATCC 700264 / AMB-1) (Magnetospirillum magneticum).